The chain runs to 788 residues: Protein kintoun (788 aa).

Disordered stretches follow at residues 194 to 249, 415 to 438, and 628 to 754; these read LRKP…SEQD, NNSE…EISP, and HKEH…SSSV. Residues 225–241 show a composition bias toward basic and acidic residues; the sequence is GKEKKDQKRVIKEEHKQ. A compositionally biased stretch (polar residues) spans 417-427; it reads SEGLTSESNLD. 2 stretches are compositionally biased toward basic and acidic residues: residues 628-644 and 667-682; these read HKEH…DVGV and ENTE…RYEE. Polar residues-rich tracts occupy residues 685-701 and 744-754; these read STSC…QKDS and NFDSRPASSSV.

Belongs to the PIH1 family. Kintoun subfamily.

Its subcellular location is the cytoplasm. It localises to the dynein axonemal particle. In terms of biological role, required for cytoplasmic pre-assembly of axonemal dyneins, thereby playing a central role in motility in cilia and flagella. Involved in pre-assembly of dynein arm complexes in the cytoplasm before intraflagellar transport loads them for the ciliary compartment. This is Protein kintoun from Xenopus laevis (African clawed frog).